Here is a 110-residue protein sequence, read N- to C-terminus: MKQLIRRLSRVADSTQYSLLRSESQRGRTKKEKHKSWVPEGHVPVYVGHEMERFVVNAELLNHPVFVALLKQSAQEYGYEQQGVLRIPCHVLVFERILESLRLGLADRVT.

It belongs to the ARG7 family. In terms of tissue distribution, highly expressed in the steles of roots and hypocotyls.

It localises to the cytoplasm. Functionally, plays a role in the regulation of cell expansion, root meristem patterning and auxin transport. The polypeptide is Auxin-responsive protein SAUR71 (Arabidopsis thaliana (Mouse-ear cress)).